The following is a 126-amino-acid chain: Adrenocorticotropic hormone receptor (126 aa).

The chain crosses the membrane as a helical span at residues 1-25 (VLPEEIFFTISIVGVLENLIVLLAV). Over 26–34 (FKNKNLQAP) the chain is Cytoplasmic. A helical membrane pass occupies residues 35–55 (MYFFICSLAISDMLGSLYKIL). Topologically, residues 56 to 80 (ENILIILRNMGYLKPRGSFETTADD) are extracellular. Residues 81–102 (IIDSLFVLSLLGAIFSLSVIAA) traverse the membrane as a helical segment. The Cytoplasmic portion of the chain corresponds to 103-123 (DRYITIFHALRYHSIVTMRRT). A helical membrane pass occupies residues 124–126 (VVV).

This sequence belongs to the G-protein coupled receptor 1 family. In terms of assembly, interacts with MRAP; increasing ligand-sensitivity and generation of cAMP. Interacts with MRAP2; competing with MRAP for binding to MC2R and impairing the binding of corticotropin (ACTH).

Its subcellular location is the cell membrane. Receptor for corticotropin (ACTH). This receptor is mediated by G proteins (G(s)) which activate adenylate cyclase (cAMP). The chain is Adrenocorticotropic hormone receptor (MC2R) from Papio hamadryas (Hamadryas baboon).